The primary structure comprises 572 residues: Urease subunit alpha (572 aa).

The Urease domain maps to 133-572; sequence GGIDLHVHYI…TSLSQRYFLF (440 aa). Ni(2+) is bound by residues His-138, His-140, and Lys-221. Lys-221 carries the post-translational modification N6-carboxylysine. His-223 is a substrate binding site. Residues His-250 and His-276 each contribute to the Ni(2+) site. The Proton donor role is filled by His-324. Residue Asp-364 coordinates Ni(2+).

It belongs to the metallo-dependent hydrolases superfamily. Urease alpha subunit family. Heterotrimer of UreA (gamma), UreB (beta) and UreC (alpha) subunits. Three heterotrimers associate to form the active enzyme. The cofactor is Ni cation. In terms of processing, carboxylation allows a single lysine to coordinate two nickel ions.

The protein localises to the cytoplasm. It catalyses the reaction urea + 2 H2O + H(+) = hydrogencarbonate + 2 NH4(+). It participates in nitrogen metabolism; urea degradation; CO(2) and NH(3) from urea (urease route): step 1/1. In Streptococcus thermophilus (strain CNRZ 1066), this protein is Urease subunit alpha.